We begin with the raw amino-acid sequence, 310 residues long: ADP-L-glycero-D-manno-heptose-6-epimerase (310 aa).

NADP(+)-binding positions include 10 to 11 (FI), 31 to 32 (DN), K38, K53, 75 to 79 (EGACS), and N92. Y140 serves as the catalytic Proton acceptor. K144 lines the NADP(+) pocket. N169 lines the substrate pocket. NADP(+) is bound by residues V170 and K178. Catalysis depends on K178, which acts as the Proton acceptor. Substrate-binding positions include S180, H187, 201–204 (FEGS), R209, and Y272.

Belongs to the NAD(P)-dependent epimerase/dehydratase family. HldD subfamily. Homopentamer. Requires NADP(+) as cofactor.

It catalyses the reaction ADP-D-glycero-beta-D-manno-heptose = ADP-L-glycero-beta-D-manno-heptose. It functions in the pathway nucleotide-sugar biosynthesis; ADP-L-glycero-beta-D-manno-heptose biosynthesis; ADP-L-glycero-beta-D-manno-heptose from D-glycero-beta-D-manno-heptose 7-phosphate: step 4/4. Its function is as follows. Catalyzes the interconversion between ADP-D-glycero-beta-D-manno-heptose and ADP-L-glycero-beta-D-manno-heptose via an epimerization at carbon 6 of the heptose. The sequence is that of ADP-L-glycero-D-manno-heptose-6-epimerase from Salmonella newport (strain SL254).